A 318-amino-acid polypeptide reads, in one-letter code: Protein IMPACT-A (318 aa).

The region spanning 14 to 116 (DEVEALTSIY…EKIREFLLGK (103 aa)) is the RWD domain. The interval 296–318 (EESSKQTAKSKKVGKECKKKADH) is disordered. A compositionally biased stretch (basic and acidic residues) spans 308–318 (VGKECKKKADH).

This sequence belongs to the IMPACT family. As to quaternary structure, interacts with GCN1; prevents the interaction of GCN1 with EIF2AK4/GCN2 and inhibits EIF2AK4/GCN2 kinase activity. Interaction with RPL39; this interaction occurs in a GCN1-independent manner. Associates with ribosomes; this interaction occurs in a GCN1-independent manner. Associates with actin; this interaction occurs in a GCN1-independent manner.

The protein localises to the cytoplasm. Its function is as follows. Translational regulator that ensures constant high levels of translation upon a variety of stress conditions, such as amino acid starvation, UV-C irradiation, proteasome inhibitor treatment and glucose deprivation. Plays a role as a negative regulator of the EIF2AK4/GCN2 kinase activity; impairs GCN1-mediated EIF2AK4/GCN2 activation, and hence EIF2AK4/GCN2-mediated eIF-2-alpha phosphorylation and subsequent down-regulation of protein synthesis. Plays a role in differentiation of neuronal cells by stimulating neurite outgrowth. The polypeptide is Protein IMPACT-A (impact-A) (Xenopus tropicalis (Western clawed frog)).